A 226-amino-acid chain; its full sequence is Lipoprotein-releasing system ATP-binding protein LolD (226 aa).

The region spanning 6-226 (LKLDNIRRAF…KMSEGLLVEV (221 aa)) is the ABC transporter domain. 42 to 49 (GPSGAGKS) serves as a coordination point for ATP.

The protein belongs to the ABC transporter superfamily. Lipoprotein translocase (TC 3.A.1.125) family. As to quaternary structure, the complex is composed of two ATP-binding proteins (LolD) and two transmembrane proteins (LolC and LolE).

The protein resides in the cell inner membrane. Its function is as follows. Part of the ABC transporter complex LolCDE involved in the translocation of mature outer membrane-directed lipoproteins, from the inner membrane to the periplasmic chaperone, LolA. Responsible for the formation of the LolA-lipoprotein complex in an ATP-dependent manner. This is Lipoprotein-releasing system ATP-binding protein LolD from Paramagnetospirillum magneticum (strain ATCC 700264 / AMB-1) (Magnetospirillum magneticum).